The primary structure comprises 1818 residues: Integrin beta-4 (1818 aa).

Positions 1-28 (MAGPCCSPWVKLLLLAAMLSASLPGDLA) are cleaved as a signal peptide. At 29-712 (NRCKKAQVKS…HKKKDCPPGS (684 aa)) the chain is on the extracellular side. Residues 30-74 (RCKKAQVKSCTECIRVDKSCAYCTDELFKERRCNTQAELLAAGCR) enclose the PSI domain. Disulfide bonds link Cys31/Cys49, Cys39/Cys457, Cys42/Cys62, Cys52/Cys73, Cys246/Cys289, Cys459/Cys478, Cys470/Cys481, and Cys483/Cys492. The VWFA domain maps to 132–310 (DLYILMDFSN…KTQDYPSVPT (179 aa)). The Mg(2+) site is built by Ser140 and Ser142. Residues Ser142, Asp145, Asp146, and Asp177 each contribute to the Ca(2+) site. Residues 195-200 (WPNSDP) form an involved in NRG1- and IGF1-binding region. Ca(2+) contacts are provided by Asn229, Asp231, Pro233, and Glu234. Glu234 contacts Mg(2+). Asn328 is a glycosylation site (N-linked (GlcNAc...) asparagine). Residue Glu351 coordinates Ca(2+). I-EGF domains lie at 459-493 (CELQKEVRSARCHFRGDFMCGHCVCNEGWSGKTCN), 494-539 (CSTG…HFCE), 540-576 (YDNFQCPRTSGFLCNDRGRCSMGECVCEPGWTGRSCD), and 577-617 (CPLS…TTCE). Residues 473–475 (RGD) carry the Cell attachment site motif. An N-linked (GlcNAc...) asparagine glycan is attached at Asn493. Intrachain disulfides connect Cys494/Cys522, Cys505/Cys520, Cys514/Cys525, Cys527/Cys538, Cys545/Cys559, Cys553/Cys564, Cys566/Cys575, Cys577/Cys600, Cys584/Cys598, Cys592/Cys603, and Cys605/Cys616. N-linked (GlcNAc...) asparagine glycosylation occurs at Asn581. Asn619 carries an N-linked (GlcNAc...) asparagine glycan. Disulfide bonds link Cys628/Cys673, Cys634/Cys653, Cys637/Cys650, and Cys682/Cys708. Asn697 carries N-linked (GlcNAc...) asparagine glycosylation. A helical transmembrane segment spans residues 713–733 (FWWLIPLLIFLLLLLALLLLL). Residues 734 to 751 (CWKYCACCKACLGLLPCC) form a palmitoylated on several cysteines region. Topologically, residues 734 to 1818 (CWKYCACCKA…THMDQQFFQT (1085 aa)) are cytoplasmic. Position 773 is a phosphoserine (Ser773). One can recognise a Calx-beta domain in the interval 981-1086 (VNITIIKEQA…QVRRFQVQLS (106 aa)). The Cell attachment site motif lies at 1005 to 1007 (RGD). Ser1071 and Ser1121 each carry phosphoserine. The tract at residues 1115 to 1137 (INQTLSSPPPPHGDLGAPQNPNA) is disordered. Fibronectin type-III domains follow at residues 1131-1220 (APQN…THQE) and 1224-1323 (EPGR…TQPK). The tract at residues 1402–1433 (LSASSGRSDEDGSVAGGVEGEGSGWIRGATPR) is disordered. Residues 1415 to 1426 (VAGGVEGEGSGW) show a composition bias toward gly residues. 3 positions are modified to phosphoserine: Ser1451, Ser1454, and Ser1470. At Thr1483 the chain carries Phosphothreonine. Ser1490 is modified (phosphoserine). Position 1526 is a phosphothreonine (Thr1526). 2 Fibronectin type-III domains span residues 1526-1621 (TPTR…VHPQ) and 1639-1735 (APGP…SQVG). Residue Ser1787 is modified to Phosphoserine.

The protein belongs to the integrin beta chain family. As to quaternary structure, heterodimer of an alpha and a beta subunit. Beta-4 associates with alpha-6. Interacts (via cytoplasmic region) with COL17A1 (via cytoplasmic region). Interacts (via cytoplasmic region) with DST isoform 3 (via N-terminus). Interacts (via cytoplasmic domain) with DST (via N-terminus). Interacts with RAC1. ITGA6:ITGB4 is found in a ternary complex with NRG1 and ERBB3. ITGA6:ITGB4 is found in a ternary complex with IGF1 and IGF1R. ITGA6:ITGB4 interacts with IGF2. Interacts with TMEM268; this interaction prevents ITGB4 degradation. In terms of processing, palmitoylated by DHHC3 at several cysteines of the membrane-proximal region, enhancing stability and cell surface expression. Palmitoylation also promotes secondary association with tertaspanins.

It localises to the cell membrane. The protein localises to the cell junction. The protein resides in the hemidesmosome. In terms of biological role, integrin alpha-6/beta-4 is a receptor for laminin. It plays a critical structural role in the hemidesmosome of epithelial cells. Is required for the regulation of keratinocyte polarity and motility. ITGA6:ITGB4 binds to NRG1 (via EGF domain) and this binding is essential for NRG1-ERBB signaling. ITGA6:ITGB4 binds to IGF1 and this binding is essential for IGF1 signaling. ITGA6:ITGB4 binds to IGF2 and this binding is essential for IGF2 signaling. The sequence is that of Integrin beta-4 (Itgb4) from Mus musculus (Mouse).